Reading from the N-terminus, the 286-residue chain is Acetylglutamate kinase (286 aa).

Substrate-binding positions include 69–70, arginine 91, and asparagine 185; that span reads GG.

It belongs to the acetylglutamate kinase family. ArgB subfamily.

The protein localises to the cytoplasm. It carries out the reaction N-acetyl-L-glutamate + ATP = N-acetyl-L-glutamyl 5-phosphate + ADP. It participates in amino-acid biosynthesis; L-arginine biosynthesis; N(2)-acetyl-L-ornithine from L-glutamate: step 2/4. Catalyzes the ATP-dependent phosphorylation of N-acetyl-L-glutamate. This is Acetylglutamate kinase from Chlorobium chlorochromatii (strain CaD3).